Here is a 96-residue protein sequence, read N- to C-terminus: MPAIEIGRICVKTRGREAGKKCVIVDIIDENFVLVTGPKDVNKVKRRRVNILHLEPTDKKIDINKGASDDEVKKKLEEAGLIEFMKQDVKPKIPVI.

This sequence belongs to the eukaryotic ribosomal protein eL14 family.

The polypeptide is Large ribosomal subunit protein eL14 (Sulfurisphaera tokodaii (strain DSM 16993 / JCM 10545 / NBRC 100140 / 7) (Sulfolobus tokodaii)).